Reading from the N-terminus, the 1190-residue chain is Phosphatidylinositol-3,5-bisphosphate 3-phosphatase MTMR4 (1190 aa).

Ser-8 is subject to Phosphoserine. A Myotubularin phosphatase domain is found at 153 to 570 (EHIRCRQEAE…RALHLWTAVY (418 aa)). Residues Asn-320, Asn-345, and Ile-346 each coordinate a 1,2-diacyl-sn-glycero-3-phospho-(1D-myo-inositol-3,5-bisphosphate). Positions 320, 345, and 346 each coordinate a 1,2-diacyl-sn-glycero-3-phospho-(1D-myo-inositol-3-phosphate). Cys-407 serves as the catalytic Phosphocysteine intermediate. Positions 408, 409, 410, 411, 412, 413, 449, and 453 each coordinate a 1,2-diacyl-sn-glycero-3-phospho-(1D-myo-inositol-3,5-bisphosphate). A 1,2-diacyl-sn-glycero-3-phospho-(1D-myo-inositol-3-phosphate) is bound by residues Ser-408, Asp-409, Gly-410, Trp-411, Asp-412, and Arg-413. A 1,2-diacyl-sn-glycero-3-phospho-(1D-myo-inositol-3-phosphate) is bound at residue Arg-453. Ser-610 and Ser-629 each carry phosphoserine. 3 disordered regions span residues 616 to 694 (SACD…FKGH), 724 to 749 (ETEA…GKPP), and 773 to 848 (DFPE…PSSV). Positions 618-637 (CDTSSPLTRTSSDPNLNNHS) are enriched in polar residues. Polar residues predominate over residues 782 to 847 (LTGTPQQPHL…SISHQEQPSS (66 aa)). The PY-motif; substrate motif for NEDD4 motif lies at 999 to 1003 (VPPLY). Residues 1020–1052 (LRQIEAGYRQEVEQLRRQVRELQMRLDIRHCCA) adopt a coiled-coil conformation. The FYVE-type zinc-finger motif lies at 1109-1169 (DHMASHCFNC…VCNSCYEHIQ (61 aa)). 8 residues coordinate Zn(2+): Cys-1115, Cys-1118, Cys-1131, Cys-1134, Cys-1139, Cys-1142, Cys-1161, and Cys-1164.

The protein belongs to the protein-tyrosine phosphatase family. Non-receptor class myotubularin subfamily. In terms of assembly, homooligomeric. Forms MTMR3:MTMR4 heterooligomers; regulates the localization of both proteins. The MTMR3:MTMR4 heterooligomer can also recruit both CEP55 and PLK1; occurs during early mitosis, regulates the phosphorylation of CEP55 by PLK1 and its recruitment to the midbody where it can mediate cell abscission. Interacts with SMAD2 and SMAD3; negatively regulates TGF-beta signaling through SMAD2 and SMAD3 dephosphorylation and retention in endosomes. Interacts with SMAD1; negatively regulates BMP signaling through SMAD1 dephosphorylation and retention in endosomes. Post-translationally, ubiquitinated. Ubiquitination by NEDD4 probably leads to proteasomal degradation. In terms of processing, phosphorylated by CDK1 during mitosis.

Its subcellular location is the early endosome membrane. The protein resides in the recycling endosome membrane. It is found in the late endosome membrane. The protein localises to the cytoplasmic vesicle. It localises to the phagosome membrane. The enzyme catalyses a 1,2-diacyl-sn-glycero-3-phospho-(1D-myo-inositol-3-phosphate) + H2O = a 1,2-diacyl-sn-glycero-3-phospho-(1D-myo-inositol) + phosphate. The catalysed reaction is a 1,2-diacyl-sn-glycero-3-phospho-(1D-myo-inositol-3,5-bisphosphate) + H2O = a 1,2-diacyl-sn-glycero-3-phospho-(1D-myo-inositol-5-phosphate) + phosphate. It catalyses the reaction 1,2-dioctanoyl-sn-glycero-3-phospho-(1-D-myo-inositol-3-phosphate) + H2O = 1,2-dioctanoyl-sn-glycero-3-phospho-(1D-myo-inositol) + phosphate. It carries out the reaction 1,2-dioctanoyl-sn-glycero-3-phospho-(1D-myo-inositol-3,5-bisphosphate) + H2O = 1,2-dioctanoyl-sn-glycero-3-phospho-(1D-myo-inositol-5-phosphate) + phosphate. Functionally, lipid phosphatase that specifically dephosphorylates the D-3 position of phosphatidylinositol 3-phosphate and phosphatidylinositol 3,5-bisphosphate, generating phosphatidylinositol and phosphatidylinositol 5-phosphate. Decreases the levels of phosphatidylinositol 3-phosphate, a phospholipid found in cell membranes where it acts as key regulator of both cell signaling and intracellular membrane traffic, in a subset of endosomal membranes to negatively regulate both endocytic recycling and trafficking and/or maturation of endosomes toward lysosomes. Through phosphatidylinositol 3-phosphate turnover in phagosome membranes regulates phagocytosis and phagosome maturation. By decreasing phosphatidylinositol 3-monophosphate (PI3P) levels in immune cells it can also regulate the innate immune response. Beside its lipid phosphatase activity, can also function as a molecular adapter to regulate midbody abscission during mitotic cytokinesis. Can also negatively regulate TGF-beta and BMP signaling through Smad proteins dephosphorylation and retention in endosomes. The chain is Phosphatidylinositol-3,5-bisphosphate 3-phosphatase MTMR4 from Mus musculus (Mouse).